Reading from the N-terminus, the 439-residue chain is Mitochondrial distribution and morphology protein 12 (439 aa).

One can recognise an SMP-LTD domain in the interval 1–439 (MSIDINWEAA…VYPSFWTFLV (439 aa)). A compositionally biased stretch (acidic residues) spans 71-84 (EEDEGDEDFSDDQD). Disordered regions lie at residues 71 to 104 (EEDE…GTWQ), 182 to 278 (TPLA…HEKK), and 362 to 385 (YIPG…RRDD). Positions 212–229 (DYPRPVHRQTDTDIDSGH) are enriched in basic and acidic residues. The segment covering 230–255 (SRPSTADTLNSINSQRISNPALSHPH) has biased composition (polar residues). Basic and acidic residues predominate over residues 256–269 (SSNESHPDTRDHSP).

The protein belongs to the MDM12 family. As to quaternary structure, component of the ER-mitochondria encounter structure (ERMES) or MDM complex, composed of MMM1, MDM10, MDM12 and MDM34. An MMM1 homodimer associates with one molecule of MDM12 on each side in a pairwise head-to-tail manner, and the SMP-LTD domains of MMM1 and MDM12 generate a continuous hydrophobic tunnel for phospholipid trafficking.

It localises to the mitochondrion outer membrane. It is found in the endoplasmic reticulum membrane. In terms of biological role, component of the ERMES/MDM complex, which serves as a molecular tether to connect the endoplasmic reticulum (ER) and mitochondria. Components of this complex are involved in the control of mitochondrial shape and protein biogenesis, and function in nonvesicular lipid trafficking between the ER and mitochondria. MDM12 is required for the interaction of the ER-resident membrane protein MMM1 and the outer mitochondrial membrane-resident beta-barrel protein MDM10. The MDM12-MMM1 subcomplex functions in the major beta-barrel assembly pathway that is responsible for biogenesis of all mitochondrial outer membrane beta-barrel proteins, and acts in a late step after the SAM complex. The MDM10-MDM12-MMM1 subcomplex further acts in the TOM40-specific pathway after the action of the MDM12-MMM1 complex. Essential for establishing and maintaining the structure of mitochondria and maintenance of mtDNA nucleoids. The polypeptide is Mitochondrial distribution and morphology protein 12 (Uncinocarpus reesii (strain UAMH 1704)).